A 575-amino-acid polypeptide reads, in one-letter code: U3 small nucleolar RNA-associated protein 9 (575 aa).

Basic and acidic residues-rich tracts occupy residues 340–355 (NEKN…KLEE) and 364–375 (VQHEKKETETKI). The disordered stretch occupies residues 340-375 (NEKNNADEADQKKLEEKEEEAQPEVQHEKKETETKI). Residues S547 and S564 each carry the phosphoserine modification.

As to quaternary structure, interacts with snoRNA U3. Interacts with MPP10. Component of the ribosomal small subunit (SSU) processome composed of at least 40 protein subunits and snoRNA U3. In the absence of snoRNA3, forms a complex with other t-UTPs. This complex can associate with pre-18S ribosomal RNAs.

It is found in the nucleus. The protein resides in the nucleolus. Functionally, involved in nucleolar processing of pre-18S ribosomal RNA. Required for optimal pre-ribosomal RNA transcription by RNA polymerase I together with a subset of U3 proteins required for transcription (t-UTPs). This is U3 small nucleolar RNA-associated protein 9 (UTP9) from Saccharomyces cerevisiae (strain ATCC 204508 / S288c) (Baker's yeast).